A 465-amino-acid chain; its full sequence is Putative multidrug resistance protein MdtD (465 aa).

13 helical membrane passes run 12–32, 49–69, 72–92, 102–124, 138–158, 165–185, 195–215, 219–239, 267–287, 290–310, 342–362, 393–413, and 430–450; these read LWIV…VNTA, SVIV…GWLA, IGVK…SLMC, ILSR…LTVM, FVTL…GFLV, WIFL…LLLM, FDIS…LALD, GLGL…IALG, LVGS…TPIF, IGLG…IIGS, LSLP…VLFF, LLSM…GILL, and SAFL…ALIF.

The protein belongs to the major facilitator superfamily. TCR/Tet family.

It localises to the cell inner membrane. In Yersinia pseudotuberculosis serotype O:1b (strain IP 31758), this protein is Putative multidrug resistance protein MdtD.